We begin with the raw amino-acid sequence, 202 residues long: MSRYRGARLRVTRRLGDLPGLTRKAAKRSYPPGQHGQARRKRSEYAIRLEEKQKLRFNYGVSERQLVRYVKKARAQGGSTGTNLLKLLENRLDNVCFRLGFGPTIPGSRQLVNHGHVTVNGRVVDIASYQCKAGDVIAIREKKPSKKLAETNLEFPGLANIPPHLELEKSKLTAKVVGKCEREWVALEINELLVVEYYSRKV.

Residues 18–42 (LPGLTRKAAKRSYPPGQHGQARRKR) are disordered. The S4 RNA-binding domain occupies 90 to 152 (NRLDNVCFRL…KPSKKLAETN (63 aa)).

The protein belongs to the universal ribosomal protein uS4 family. Part of the 30S ribosomal subunit. Contacts protein S5. The interaction surface between S4 and S5 is involved in control of translational fidelity.

One of the primary rRNA binding proteins, it binds directly to 16S rRNA where it nucleates assembly of the body of the 30S subunit. Its function is as follows. With S5 and S12 plays an important role in translational accuracy. This Synechococcus sp. (strain RCC307) protein is Small ribosomal subunit protein uS4.